The sequence spans 245 residues: Retrovirus-related Pol polyprotein from type-1 retrotransposable element R1 (245 aa).

The Reverse transcriptase domain maps to 1-105 (LKDGTGIVAA…VDLETYCNKA (105 aa)). Residues 106 to 245 (EVRQKFREKE…IVRDDSNLEQ (140 aa)) form a nucleic acid-binding endonuclease region.

It catalyses the reaction DNA(n) + a 2'-deoxyribonucleoside 5'-triphosphate = DNA(n+1) + diphosphate. This chain is Retrovirus-related Pol polyprotein from type-1 retrotransposable element R1, found in Popillia japonica (Japanese beetle).